Reading from the N-terminus, the 310-residue chain is UPF0282 protein PF0593 (310 aa).

The protein belongs to the UPF0282 family.

This chain is UPF0282 protein PF0593, found in Pyrococcus furiosus (strain ATCC 43587 / DSM 3638 / JCM 8422 / Vc1).